The primary structure comprises 350 residues: Biotin synthase (350 aa).

Residues 41-268 (NEVQISRLLS…KSRVRLSAGR (228 aa)) form the Radical SAM core domain. Positions 56, 60, and 63 each coordinate [4Fe-4S] cluster. [2Fe-2S] cluster contacts are provided by Cys-100, Cys-131, Cys-191, and Arg-263.

This sequence belongs to the radical SAM superfamily. Biotin synthase family. Homodimer. [4Fe-4S] cluster serves as cofactor. The cofactor is [2Fe-2S] cluster.

The catalysed reaction is (4R,5S)-dethiobiotin + (sulfur carrier)-SH + 2 reduced [2Fe-2S]-[ferredoxin] + 2 S-adenosyl-L-methionine = (sulfur carrier)-H + biotin + 2 5'-deoxyadenosine + 2 L-methionine + 2 oxidized [2Fe-2S]-[ferredoxin]. The protein operates within cofactor biosynthesis; biotin biosynthesis; biotin from 7,8-diaminononanoate: step 2/2. Its function is as follows. Catalyzes the conversion of dethiobiotin (DTB) to biotin by the insertion of a sulfur atom into dethiobiotin via a radical-based mechanism. This is Biotin synthase from Shewanella sp. (strain ANA-3).